Consider the following 214-residue polypeptide: Isochorismatase family protein 2B (214 aa).

Belongs to the isochorismatase family.

The polypeptide is Isochorismatase family protein 2B (Dictyostelium discoideum (Social amoeba)).